The chain runs to 445 residues: MTRTAPSSLRSLPAEGAAATDLLDTLQRGLAELDAQGLRRVRRTADTACDAHMRVDGRDIVGFASNDYLGLAAHPALVAAFAEGARRYGSGSGGSHLLGGHSRAHATLEDELAGFAGGFSDAPRALYFSTGYMANLAAMTALTGKHATIFSDALNHASLIDGIRLSRANVQVYPHADMAALAALLDASDAETKLIVSDTVFSMDGDIAPLAELVALAERHGAWLVVDDAHGFGVLGPQGRGALAAAALRSPNLIYVGTLGKAAGVAGAFVIAHETVIEWMIQRARSYIFTTAAPPAVAHAVSASLKVIAGDEGDARRAHLAALIERTRALLRMTRWQPVDSHTAVQPLVIGSNDATLAAMRSLDAHGLWVPAIRPPTVPAGTSRLRVSLSAAHSFDDLARLEAALIEASEGQTRRDAEQPPRSLRSLPPEGAAASLGAARRETAA.

Arginine 40 contributes to the substrate binding site. A pyridoxal 5'-phosphate-binding site is contributed by 131–132; that stretch reads GY. Histidine 156 serves as a coordination point for substrate. Residues serine 202, histidine 230, and threonine 258 each contribute to the pyridoxal 5'-phosphate site. N6-(pyridoxal phosphate)lysine is present on lysine 261. Threonine 377 is a binding site for substrate. The disordered stretch occupies residues 408-445; that stretch reads ASEGQTRRDAEQPPRSLRSLPPEGAAASLGAARRETAA.

Belongs to the class-II pyridoxal-phosphate-dependent aminotransferase family. BioF subfamily. Homodimer. Pyridoxal 5'-phosphate serves as cofactor.

It catalyses the reaction 6-carboxyhexanoyl-[ACP] + L-alanine + H(+) = (8S)-8-amino-7-oxononanoate + holo-[ACP] + CO2. Its pathway is cofactor biosynthesis; biotin biosynthesis. Catalyzes the decarboxylative condensation of pimeloyl-[acyl-carrier protein] and L-alanine to produce 8-amino-7-oxononanoate (AON), [acyl-carrier protein], and carbon dioxide. The sequence is that of 8-amino-7-oxononanoate synthase from Burkholderia ambifaria (strain MC40-6).